The sequence spans 29 residues: Scolopendra 8011.73 Da toxin (29 aa).

In terms of tissue distribution, expressed by the venom gland.

The protein localises to the secreted. The polypeptide is Scolopendra 8011.73 Da toxin (Scolopendra viridicornis nigra (Brazilian giant centipede)).